Here is a 388-residue protein sequence, read N- to C-terminus: Probable RNA-binding protein sce3 (388 aa).

The tract at residues 18 to 84 (ESFGSTNWAD…GGMGSGYQRD (67 aa)) is disordered. Positions 38–50 (DRTTSTYRATPSS) are enriched in polar residues. A phosphoserine mark is found at Ser49, Ser50, and Ser60. Thr61 is modified (phosphothreonine). A phosphoserine mark is found at Ser64, Ser67, and Ser71. The RRM domain maps to 94 to 169 (FTAHVGNLSF…RPVRITVAEP (76 aa)). Over residues 171–185 (RSFAREERSTGDWVR) the composition is skewed to basic and acidic residues. The disordered stretch occupies residues 171–388 (RSFAREERST…WTKIGKGRKH (218 aa)). Residue Ser197 is modified to Phosphoserine. Residues 208-229 (RFRDPARDPSDRVREEPREWVR) are compositionally biased toward basic and acidic residues. The span at 248 to 257 (PRSSSNVNTE) shows a compositional bias: polar residues. Residues Ser250, Ser251, and Ser252 each carry the phosphoserine modification. Residues 258–268 (ATPSATTTTSS) are compositionally biased toward low complexity. Residues 289–349 (RVEEKLAKRT…LGDGEKKSSE (61 aa)) show a composition bias toward basic and acidic residues. Ser347 carries the phosphoserine modification.

It is found in the cytoplasm. In Schizosaccharomyces pombe (strain 972 / ATCC 24843) (Fission yeast), this protein is Probable RNA-binding protein sce3 (sce3).